We begin with the raw amino-acid sequence, 716 residues long: Leucine-rich repeat neuronal protein 1 (716 aa).

The first 25 residues, 1 to 25, serve as a signal peptide directing secretion; it reads MARMSFVLAAYQMVLSLLMTSLTGS. An LRRNT domain is found at 26–72; that stretch reads SLQSSECPQLCVCEIRPWFTPQSTYREATTVDCNDLRLTRIPSNLSS. The Extracellular portion of the chain corresponds to 26 to 631; the sequence is SLQSSECPQL…DISDQETSTA (606 aa). Asn-69 carries an N-linked (GlcNAc...) asparagine glycan. 9 LRR repeats span residues 73–95, 96–117, 120–141, 144–165, 168–189, 192–213, 216–237, 240–261, and 264–285; these read DTQV…QQLF, NLTE…GLAN, QLTT…CLQD, NLQE…AFSG, NLLR…WFDS, NLEI…NFKP, NLRS…ALVG, SLES…ALQK, and NLKF…DFKN. N-linked (GlcNAc...) asparagine glycans are attached at residues Asn-96, Asn-106, and Asn-117. The 54-residue stretch at 371–424 folds into the LRRCT domain; the sequence is NPLRCDCVIHWINSNKTNIRFMEPLSMFCAMPPEYRGQQVKEVLIQDSSEQCLP. The N-linked (GlcNAc...) asparagine glycan is linked to Asn-385. The Ig-like C2-type domain occupies 424–515; that stretch reads PMISHDTFPN…GADTRVVMIK (92 aa). A disulfide bridge connects residues Cys-447 and Cys-499. Asn-517, Asn-582, and Asn-611 each carry an N-linked (GlcNAc...) asparagine glycan. Residues 525–617 form the Fibronectin type-III domain; it reads QVLKIYVKQT…SCVNVTTKNA (93 aa). The helical transmembrane segment at 632-652 threads the bilayer; that stretch reads LAAVMGSMFAVISLASIAVYI. Topologically, residues 653-716 are cytoplasmic; that stretch reads AKRFKRKNYH…VDTSRSYYMW (64 aa). Positions 691–700 are enriched in basic and acidic residues; the sequence is DSEKDKDGTA. The disordered stretch occupies residues 691-716; sequence DSEKDKDGTADTKPTQVDTSRSYYMW. Residues 702-716 show a composition bias toward polar residues; that stretch reads TKPTQVDTSRSYYMW.

The protein localises to the membrane. The chain is Leucine-rich repeat neuronal protein 1 (LRRN1) from Bos taurus (Bovine).